A 436-amino-acid polypeptide reads, in one-letter code: Small ribosomal subunit protein uS5m (436 aa).

In terms of domain architecture, S5 DRBM spans 152–218 (FETYCLEVKR…GMASRKLFHV (67 aa)). The segment at 417-436 (GVEPMPLGIGLSHVVPKKDD) is disordered.

Belongs to the universal ribosomal protein uS5 family. As to quaternary structure, component of the mitochondrial ribosome small subunit (28S) which comprises a 12S rRNA and about 30 distinct proteins.

Its subcellular location is the mitochondrion. This chain is Small ribosomal subunit protein uS5m (mrps-5), found in Caenorhabditis elegans.